The following is a 955-amino-acid chain: 2-oxoglutarate dehydrogenase E1 component (955 aa).

Belongs to the alpha-ketoglutarate dehydrogenase family. In terms of assembly, homodimer. Part of the 2-oxoglutarate dehydrogenase (OGDH) complex composed of E1 (2-oxoglutarate dehydrogenase), E2 (dihydrolipoamide succinyltransferase) and E3 (dihydrolipoamide dehydrogenase); the complex contains multiple copies of the three enzymatic components (E1, E2 and E3). The cofactor is thiamine diphosphate.

The enzyme catalyses N(6)-[(R)-lipoyl]-L-lysyl-[protein] + 2-oxoglutarate + H(+) = N(6)-[(R)-S(8)-succinyldihydrolipoyl]-L-lysyl-[protein] + CO2. Functionally, E1 component of the 2-oxoglutarate dehydrogenase (OGDH) complex which catalyzes the decarboxylation of 2-oxoglutarate, the first step in the conversion of 2-oxoglutarate to succinyl-CoA and CO(2). The chain is 2-oxoglutarate dehydrogenase E1 component from Bacillus cereus (strain G9842).